We begin with the raw amino-acid sequence, 469 residues long: 6-phosphofructo-2-kinase/fructose-2,6-bisphosphatase 4 (469 aa).

Residues 1–249 (MASPRELTQN…YYLMNIHVTP (249 aa)) form a 6-phosphofructo-2-kinase region. Ser-29 carries the phosphoserine; by PKC modification. 46–54 (GLPARGKTY) contributes to the ATP binding site. Beta-D-fructose 6-phosphate-binding residues include Arg-79 and Arg-103. Asp-129 is an active-site residue. Positions 131 and 137 each coordinate beta-D-fructose 6-phosphate. The active site involves Cys-159. ATP is bound at residue 168–173 (NIVQVK). The beta-D-fructose 6-phosphate site is built by Lys-173, Arg-194, and Tyr-198. The segment at 250–469 (RSIYLCRHGE…EALVTVPAHQ (220 aa)) is fructose-2,6-bisphosphatase. Residue Arg-256 participates in beta-D-fructose 2,6-bisphosphate binding. Catalysis depends on His-257, which acts as the Tele-phosphohistidine intermediate. Asn-263, Gly-269, and Arg-306 together coordinate beta-D-fructose 2,6-bisphosphate. Glu-326 serves as the catalytic Proton donor/acceptor. Positions 337, 351, 355, 366, 392, and 396 each coordinate beta-D-fructose 2,6-bisphosphate. 348–351 (FALR) is an ATP binding site. Residues 392–396 (QAVMR) and Tyr-428 contribute to the ATP site. Position 444 is a phosphothreonine; by PKC (Thr-444).

It in the C-terminal section; belongs to the phosphoglycerate mutase family. Homodimer. Testis.

The enzyme catalyses beta-D-fructose 2,6-bisphosphate + H2O = beta-D-fructose 6-phosphate + phosphate. It carries out the reaction beta-D-fructose 6-phosphate + ATP = beta-D-fructose 2,6-bisphosphate + ADP + H(+). With respect to regulation, the most important regulatory mechanism of these opposing activities is by phosphorylation and dephosphorylation of the enzyme. Functionally, synthesis and degradation of fructose 2,6-bisphosphate. This chain is 6-phosphofructo-2-kinase/fructose-2,6-bisphosphatase 4 (Pfkfb4), found in Rattus norvegicus (Rat).